The following is a 345-amino-acid chain: Phosphoribosylformylglycinamidine cyclo-ligase (345 aa).

The protein belongs to the AIR synthase family.

It is found in the cytoplasm. The catalysed reaction is 2-formamido-N(1)-(5-O-phospho-beta-D-ribosyl)acetamidine + ATP = 5-amino-1-(5-phospho-beta-D-ribosyl)imidazole + ADP + phosphate + H(+). It participates in purine metabolism; IMP biosynthesis via de novo pathway; 5-amino-1-(5-phospho-D-ribosyl)imidazole from N(2)-formyl-N(1)-(5-phospho-D-ribosyl)glycinamide: step 2/2. This Methylococcus capsulatus (strain ATCC 33009 / NCIMB 11132 / Bath) protein is Phosphoribosylformylglycinamidine cyclo-ligase.